A 969-amino-acid polypeptide reads, in one-letter code: Protein translocase subunit SecA (969 aa).

Residues Q99, G117 to T121, and D631 contribute to the ATP site.

Belongs to the SecA family. As to quaternary structure, monomer and homodimer. Part of the essential Sec protein translocation apparatus which comprises SecA, SecYEG and auxiliary proteins SecDF. Other proteins may also be involved.

It is found in the cell inner membrane. Its subcellular location is the cytoplasm. The enzyme catalyses ATP + H2O + cellular proteinSide 1 = ADP + phosphate + cellular proteinSide 2.. Its function is as follows. Part of the Sec protein translocase complex. Interacts with the SecYEG preprotein conducting channel. Has a central role in coupling the hydrolysis of ATP to the transfer of proteins into and across the cell membrane, serving as an ATP-driven molecular motor driving the stepwise translocation of polypeptide chains across the membrane. The polypeptide is Protein translocase subunit SecA (Chlamydia trachomatis serovar L2 (strain ATCC VR-902B / DSM 19102 / 434/Bu)).